A 502-amino-acid chain; its full sequence is GTPase Obg (502 aa).

Residues 2-159 enclose the Obg domain; the sequence is NRFIDRVVLH…HDLILELKSM (158 aa). The OBG-type G domain occupies 160–341; it reads ADVGLVGFPS…LKYKLLEIVQ (182 aa). Residues 166 to 173, 191 to 195, 212 to 215, 292 to 295, and 322 to 324 each bind GTP; these read GFPSAGKS, FTTLQ, DVPG, NKAD, and SAV. The Mg(2+) site is built by S173 and T193. The region spanning 364–444 is the OCT domain; sequence DGRRRREEFE…IGGVTFEWEP (81 aa).

It belongs to the TRAFAC class OBG-HflX-like GTPase superfamily. OBG GTPase family. As to quaternary structure, monomer. Mg(2+) is required as a cofactor.

The protein localises to the cytoplasm. Its function is as follows. An essential GTPase which binds GTP, GDP and possibly (p)ppGpp with moderate affinity, with high nucleotide exchange rates and a fairly low GTP hydrolysis rate. Plays a role in control of the cell cycle, stress response, ribosome biogenesis and in those bacteria that undergo differentiation, in morphogenesis control. The protein is GTPase Obg of Corynebacterium efficiens (strain DSM 44549 / YS-314 / AJ 12310 / JCM 11189 / NBRC 100395).